Reading from the N-terminus, the 405-residue chain is Argininosuccinate synthase (405 aa).

Residues 11-19 (AYSGGLDTS) and Ala-38 contribute to the ATP site. L-citrulline contacts are provided by Tyr-91 and Ser-96. Gly-121 is an ATP binding site. The L-aspartate site is built by Thr-123, Asn-127, and Asp-128. An L-citrulline-binding site is contributed by Asn-127. L-citrulline contacts are provided by Arg-131, Ser-181, Ser-190, Glu-266, and Tyr-278.

Belongs to the argininosuccinate synthase family. Type 1 subfamily. As to quaternary structure, homotetramer.

It is found in the cytoplasm. The catalysed reaction is L-citrulline + L-aspartate + ATP = 2-(N(omega)-L-arginino)succinate + AMP + diphosphate + H(+). The protein operates within amino-acid biosynthesis; L-arginine biosynthesis; L-arginine from L-ornithine and carbamoyl phosphate: step 2/3. The chain is Argininosuccinate synthase from Nitratiruptor sp. (strain SB155-2).